The sequence spans 94 residues: Large ribosomal subunit protein bL25 (94 aa).

The protein belongs to the bacterial ribosomal protein bL25 family. As to quaternary structure, part of the 50S ribosomal subunit; part of the 5S rRNA/L5/L18/L25 subcomplex. Contacts the 5S rRNA. Binds to the 5S rRNA independently of L5 and L18.

Functionally, this is one of the proteins that binds to the 5S RNA in the ribosome where it forms part of the central protuberance. The polypeptide is Large ribosomal subunit protein bL25 (Escherichia coli (strain K12 / DH10B)).